Consider the following 464-residue polypeptide: Dihydrolipoyl dehydrogenase (464 aa).

FAD contacts are provided by residues 33–41 (EPKYWGGVC), K50, and G113. C41 and C46 are joined by a disulfide. NAD(+) contacts are provided by residues 178–182 (GAGAI), E201, and 266–269 (AIGF). Residues D309 and A317 each contribute to the FAD site. Catalysis depends on H443, which acts as the Proton acceptor.

It belongs to the class-I pyridine nucleotide-disulfide oxidoreductase family. Homodimer. Part of the PDH complex, consisting of multiple copies of AceE (E1), DlaT (E2) and Lpd (E3), and of the BCKADH complex, consisting of multiple copies of BkdA/BkdB (E1), BkdC (E2) and Lpd (E3). FAD is required as a cofactor.

The protein resides in the cytoplasm. The catalysed reaction is N(6)-[(R)-dihydrolipoyl]-L-lysyl-[protein] + NAD(+) = N(6)-[(R)-lipoyl]-L-lysyl-[protein] + NADH + H(+). Lipoamide dehydrogenase is a component of the alpha-ketoacid dehydrogenase complexes. Catalyzes the reoxidation of dihydrolipoyl groups which are covalently attached to the lipoate acyltransferase components (E2) of the complexes. This chain is Dihydrolipoyl dehydrogenase (lpd), found in Mycobacterium bovis (strain ATCC BAA-935 / AF2122/97).